The primary structure comprises 100 residues: Small ribosomal subunit protein uS14 (100 aa).

This sequence belongs to the universal ribosomal protein uS14 family. Part of the 30S ribosomal subunit. Contacts proteins S3 and S10.

Binds 16S rRNA, required for the assembly of 30S particles and may also be responsible for determining the conformation of the 16S rRNA at the A site. In Prochlorococcus marinus (strain MIT 9303), this protein is Small ribosomal subunit protein uS14.